A 156-amino-acid chain; its full sequence is Ribosomal RNA large subunit methyltransferase H (156 aa).

Residues Leu73, Gly104, and 123-128 each bind S-adenosyl-L-methionine; that span reads LSALTL.

The protein belongs to the RNA methyltransferase RlmH family. In terms of assembly, homodimer.

It localises to the cytoplasm. It catalyses the reaction pseudouridine(1915) in 23S rRNA + S-adenosyl-L-methionine = N(3)-methylpseudouridine(1915) in 23S rRNA + S-adenosyl-L-homocysteine + H(+). In terms of biological role, specifically methylates the pseudouridine at position 1915 (m3Psi1915) in 23S rRNA. The polypeptide is Ribosomal RNA large subunit methyltransferase H (Erwinia tasmaniensis (strain DSM 17950 / CFBP 7177 / CIP 109463 / NCPPB 4357 / Et1/99)).